The sequence spans 214 residues: 3,4-dihydroxy-2-butanone 4-phosphate synthase (214 aa).

Residues 37–38 (RE), Asp42, 150–154 (RRGHT), and Glu174 contribute to the D-ribulose 5-phosphate site. Mg(2+) is bound at residue Glu38. His153 is a binding site for Mg(2+).

This sequence belongs to the DHBP synthase family. As to quaternary structure, homodimer. Mg(2+) serves as cofactor. It depends on Mn(2+) as a cofactor.

The catalysed reaction is D-ribulose 5-phosphate = (2S)-2-hydroxy-3-oxobutyl phosphate + formate + H(+). It functions in the pathway cofactor biosynthesis; riboflavin biosynthesis; 2-hydroxy-3-oxobutyl phosphate from D-ribulose 5-phosphate: step 1/1. Its function is as follows. Catalyzes the conversion of D-ribulose 5-phosphate to formate and 3,4-dihydroxy-2-butanone 4-phosphate. The polypeptide is 3,4-dihydroxy-2-butanone 4-phosphate synthase (Nitratidesulfovibrio vulgaris (strain DP4) (Desulfovibrio vulgaris)).